A 236-amino-acid chain; its full sequence is Probable apoptosis inhibitor 2 (236 aa).

One copy of the BIR repeat lies at 85–150 (RKRSFASFKW…AHAADCAFRR (66 aa)). Zn(2+) contacts are provided by Cys-123, Cys-126, His-142, and Cys-146. The segment at 189 to 223 (CKVCFVNEKSVCFLPCRHLVVCAECSPRCKRCCVC) adopts an RING-type zinc-finger fold.

The sequence is that of Probable apoptosis inhibitor 2 (IAP2) from Orgyia pseudotsugata multicapsid polyhedrosis virus (OpMNPV).